The sequence spans 205 residues: Large ribosomal subunit protein bL25 (205 aa).

The tract at residues 185–205 (PAGAVSEAAEGGEAAGETPAA) is disordered. The segment covering 186–205 (AGAVSEAAEGGEAAGETPAA) has biased composition (low complexity).

It belongs to the bacterial ribosomal protein bL25 family. CTC subfamily. Part of the 50S ribosomal subunit; part of the 5S rRNA/L5/L18/L25 subcomplex. Contacts the 5S rRNA. Binds to the 5S rRNA independently of L5 and L18.

This is one of the proteins that binds to the 5S RNA in the ribosome where it forms part of the central protuberance. This chain is Large ribosomal subunit protein bL25, found in Cupriavidus taiwanensis (strain DSM 17343 / BCRC 17206 / CCUG 44338 / CIP 107171 / LMG 19424 / R1) (Ralstonia taiwanensis (strain LMG 19424)).